The following is a 200-amino-acid chain: Probable molybdenum cofactor guanylyltransferase (200 aa).

GTP is bound by residues 9 to 11 (LAG), Lys-21, Asp-69, and Asp-100. Asp-100 contributes to the Mg(2+) binding site.

Belongs to the MobA family. It depends on Mg(2+) as a cofactor.

The protein resides in the cytoplasm. The catalysed reaction is Mo-molybdopterin + GTP + H(+) = Mo-molybdopterin guanine dinucleotide + diphosphate. Functionally, transfers a GMP moiety from GTP to Mo-molybdopterin (Mo-MPT) cofactor (Moco or molybdenum cofactor) to form Mo-molybdopterin guanine dinucleotide (Mo-MGD) cofactor. The chain is Probable molybdenum cofactor guanylyltransferase from Bacillus cereus (strain AH820).